Reading from the N-terminus, the 535-residue chain is Alpha-1,3-mannosyl-glycoprotein 4-beta-N-acetylglucosaminyltransferase A (535 aa).

The Cytoplasmic segment spans residues 1–4 (MRLR). The chain crosses the membrane as a helical; Signal-anchor for type II membrane protein span at residues 5-27 (NGTVATALAFITSFLTLSWYTTW). The stretch at 28-63 (QNGKEKLIAYQREFLALKERLRIAEHRISQRSSELN) forms a coiled coil. The Lumenal segment spans residues 28-535 (QNGKEKLIAY…NEIHIKKATK (508 aa)). Residues asparagine 77 and asparagine 458 are each glycosylated (N-linked (GlcNAc...) asparagine). Phosphoserine is present on serine 474.

This sequence belongs to the glycosyltransferase 54 family. A divalent metal cation is required as a cofactor. N-glycosylated.

The protein localises to the golgi apparatus membrane. It localises to the secreted. The enzyme catalyses N(4)-{beta-D-GlcNAc-(1-&gt;2)-alpha-D-Man-(1-&gt;3)-[beta-D-GlcNAc-(1-&gt;2)-alpha-D-Man-(1-&gt;6)]-beta-D-Man-(1-&gt;4)-beta-D-GlcNAc-(1-&gt;4)-beta-D-GlcNAc}-L-asparaginyl-[protein] + UDP-N-acetyl-alpha-D-glucosamine = N(4)-{beta-D-GlcNAc-(1-&gt;2)-[beta-D-GlcNAc-(1-&gt;4)]-alpha-D-Man-(1-&gt;3)-[beta-D-GlcNAc-(1-&gt;2)-alpha-D-Man-(1-&gt;6)]-beta-D-Man-(1-&gt;4)-beta-D-GlcNAc-(1-&gt;4)-beta-D-GlcNAc}-L-asparaginyl-[protein] + UDP + H(+). It carries out the reaction an N(4)-{beta-D-GlcNAc-(1-&gt;2)-alpha-D-Man-(1-&gt;3)-[alpha-D-Man-(1-&gt;6)]-beta-D-Man-(1-&gt;4)-beta-D-GlcNAc-(1-&gt;4)-beta-D-GlcNAc}-L-asparaginyl-[protein] + UDP-N-acetyl-alpha-D-glucosamine = an N(4)-{beta-D-GlcNAc-(1-&gt;2)-[beta-D-GlcNAc-(1-&gt;4)]-alpha-D-Man-(1-&gt;3)-[alpha-D-Man-(1-&gt;6)]-beta-D-Man-(1-&gt;4)-beta-D-GlcNAc-(1-&gt;4)-beta-D-GlcNAc}-L-asparaginyl-[protein] + UDP + H(+). It catalyses the reaction an N(4)-{beta-D-GlcNAc-(1-&gt;2)-alpha-D-Man-(1-&gt;3)-[beta-D-GlcNAc-(1-&gt;2)-[beta-D-GlcNAc-(1-&gt;6)]-alpha-D-Man-(1-&gt;6)]-beta-D-Man-(1-&gt;4)-beta-D-GlcNAc-(1-&gt;4)-beta-D-GlcNAc}-L-asparaginyl-[protein] + UDP-N-acetyl-alpha-D-glucosamine = an N(4)-{beta-D-GlcNAc-(1-&gt;2)-[beta-D-GlcNAc-(1-&gt;4)]-alpha-D-Man-(1-&gt;3)-[beta-D-GlcNAc-(1-&gt;2)-[beta-D-GlcNAc-(1-&gt;6)]-alpha-D-Man-(1-&gt;6)]-beta-D-Man-(1-&gt;4)-beta-D-GlcNAc-(1-&gt;4)-beta-D-GlcNAc}-L-asparaginyl-[protein] + UDP + H(+). The catalysed reaction is an N(4)-{beta-D-GlcNAc-(1-&gt;2)-alpha-D-Man-(1-&gt;3)-[beta-D-GlcNAc-(1-&gt;2)-alpha-D-Man-(1-&gt;6)]-beta-D-Man-(1-&gt;4)-beta-D-GlcNAc-(1-&gt;4)-[alpha-L-Fuc-(1-&gt;6)]-beta-D-GlcNAc}-L-asparaginyl-[protein] + UDP-N-acetyl-alpha-D-glucosamine = N(4)-{beta-D-GlcNAc-(1-&gt;2)-[beta-D-GlcNAc-(1-&gt;4)]-alpha-D-Man-(1-&gt;3)-[beta-D-GlcNAc-(1-&gt;2)-alpha-D-Man-(1-&gt;6)]-beta-D-Man-(1-&gt;4)-beta-D-GlcNAc-(1-&gt;4)-[alpha-L-Fuc-(1-&gt;6)]-beta-D-GlcNAc}-asparaginyl-[protein] + UDP + H(+). The enzyme catalyses an N(4)-{beta-D-GlcNAc-(1-&gt;2)-alpha-D-Man-(1-&gt;3)-[beta-D-Gal-(1-&gt;4)-beta-D-GlcNAc-(1-&gt;2)-alpha-D-Man-(1-&gt;6)]-beta-D-Man-(1-&gt;4)-beta-D-GlcNAc-(1-&gt;4)-beta-D-GlcNAc}-L-asparaginyl-[protein] + UDP-N-acetyl-alpha-D-glucosamine = an N(4)-{beta-D-GlcNAc-(1-&gt;2)-[beta-D-GlcNAc-(1-&gt;4)]-alpha-D-Man-(1-&gt;3)-[beta-D-Gal-(1-&gt;4)-beta-D-GlcNAc-(1-&gt;2)-alpha-D-Man-(1-&gt;6)]-beta-D-Man-(1-&gt;4)-beta-D-GlcNAc-(1-&gt;4)-beta-D-GlcNAc}-L-asparaginyl-[protein] + UDP + H(+). It carries out the reaction N(4)-{beta-D-GlcNAc-(1-&gt;2)-alpha-D-Man-(1-&gt;3)-[alpha-D-Man-(1-&gt;3)-{alpha-D-Man-(1-&gt;6)}-alpha-D-Man-(1-&gt;6)]-beta-D-Man-(1-&gt;4)-beta-D-GlcNAc-(1-&gt;4)-beta-D-GlcNAc}-asparaginyl-[protein] + UDP-N-acetyl-alpha-D-glucosamine = N(4)-{beta-D-GlcNAc-(1-&gt;2)-[beta-D-GlcNAc-(1-&gt;4)]-alpha-D-Man-(1-&gt;3)-[alpha-D-Man-(1-&gt;3)-{alpha-D-Man-(1-&gt;6)}-alpha-D-Man-(1-&gt;6)]-beta-D-Man-(1-&gt;4)-beta-D-GlcNAc-(1-&gt;4)-beta-D-GlcNAc}-asparaginyl-[protein] + UDP + H(+). It catalyses the reaction N(4)-{beta-D-GlcNAc-(1-&gt;2)-alpha-D-Man-(1-&gt;3)-beta-D-Man-(1-&gt;4)-beta-D-GlcNAc-(1-&gt;4)-beta-D-GlcNAc}-asparaginyl-[protein] + UDP-N-acetyl-alpha-D-glucosamine = N(4)-{beta-D-GlcNAc-(1-&gt;2)-[beta-D-GlcNAc-(1-&gt;4)]-alpha-D-Man-(1-&gt;3)-beta-D-Man-(1-&gt;4)-beta-D-GlcNAc-(1-&gt;4)-beta-D-GlcNAc}-asparaginyl-[protein] + UDP + H(+). It functions in the pathway protein modification; protein glycosylation. With respect to regulation, inhibited by UDP. In terms of biological role, glycosyltransferase that catalyze the transfer of GlcNAc from UDP-GlcNAc to the GlcNAcbeta1-2Manalpha1-3 arm of the core structure of N-linked glycans through a beta1-4 linkage and participates in the production of tri- and tetra-antennary N-linked sugar chains. Involved in glucose transport by mediating SLC2A2/GLUT2 glycosylation, thereby controlling cell-surface expression of SLC2A2 in pancreatic beta cells. This chain is Alpha-1,3-mannosyl-glycoprotein 4-beta-N-acetylglucosaminyltransferase A, found in Macaca fascicularis (Crab-eating macaque).